The following is a 416-amino-acid chain: MALSITRGLLLLAALCCLAPISLAGVLQGHAVQETDDTSHQEAACHKIAPNLANFAFSIYHHLAHQSNTSNIFFSPVSIASAFAMLSLGAKGNTHTEILKGLGFNLTELAEAEIHKGFQHLLHTLNQPNHQLQLTTGNGLFINESAKLVDTFLEDVKNLYHSEAFSINFRDAEEAKKKINDYVEKGSHGKIVELVKVLDPNTVFALVNYISFKGKWEKPFEMKHTTERDFHVDEQTTVKVPMMNRLGMFDLHYCDKLASWVLLLDYVGNVTACFILPDLGKLQQLEDKLNNELLAKFLEKKYASSANLHLPKLSISETYDLKSVLGDVGITEVFSDRADLSGITKEQPLKVSKALHKAALTIDEKGTEAVGSTFLEAIPMSLPPDVEFNRPFLCILYDRNTKSPLFVGKVVNPTQA.

Positions 1 to 24 are cleaved as a signal peptide; sequence MALSITRGLLLLAALCCLAPISLA. Residues Asn-68, Asn-105, Asn-143, and Asn-269 are each glycosylated (N-linked (GlcNAc...) asparagine). The RCL stretch occupies residues 371–390; it reads GSTFLEAIPMSLPPDVEFNR. Position 381 is a phosphoserine (Ser-381).

Belongs to the serpin family. Interacts with CELA2A. Interacts with ERGIC3 and LMAN1/ERGIC53. Interacts with PRSS1/Trypsin. Plasma.

The protein resides in the secreted. Its function is as follows. Inhibitor of serine proteases. Its primary target is elastase, but it also has a moderate affinity for plasmin and thrombin. Inhibits trypsin, chymotrypsin and plasminogen activator. This is Alpha-1-antiproteinase (SERPINA1) from Bos taurus (Bovine).